Consider the following 180-residue polypeptide: NAD(P)H-quinone oxidoreductase subunit J (180 aa).

Positions 1-16 (MNEETQTSELTNTDQG) are enriched in polar residues. The interval 1–23 (MNEETQTSELTNTDQGPQIEPGP) is disordered.

It belongs to the complex I 30 kDa subunit family. NDH-1 can be composed of about 15 different subunits; different subcomplexes with different compositions have been identified which probably have different functions.

It is found in the cellular thylakoid membrane. It carries out the reaction a plastoquinone + NADH + (n+1) H(+)(in) = a plastoquinol + NAD(+) + n H(+)(out). The enzyme catalyses a plastoquinone + NADPH + (n+1) H(+)(in) = a plastoquinol + NADP(+) + n H(+)(out). Its function is as follows. NDH-1 shuttles electrons from an unknown electron donor, via FMN and iron-sulfur (Fe-S) centers, to quinones in the respiratory and/or the photosynthetic chain. The immediate electron acceptor for the enzyme in this species is believed to be plastoquinone. Couples the redox reaction to proton translocation, and thus conserves the redox energy in a proton gradient. Cyanobacterial NDH-1 also plays a role in inorganic carbon-concentration. This chain is NAD(P)H-quinone oxidoreductase subunit J, found in Prochlorococcus marinus (strain MIT 9211).